We begin with the raw amino-acid sequence, 126 residues long: Large ribosomal subunit protein bL20c (126 aa).

This sequence belongs to the bacterial ribosomal protein bL20 family.

It localises to the plastid. The protein resides in the chloroplast. Binds directly to 23S ribosomal RNA and is necessary for the in vitro assembly process of the 50S ribosomal subunit. It is not involved in the protein synthesizing functions of that subunit. The sequence is that of Large ribosomal subunit protein bL20c from Illicium oligandrum (Star anise).